Here is a 141-residue protein sequence, read N- to C-terminus: High mobility group B protein 3 (141 aa).

2 stretches are compositionally biased toward basic and acidic residues: residues 1–12 (MKGAKSKAETRS) and 70–110 (GGEK…LEEG). Disordered regions lie at residues 1 to 40 (MKGA…RPSS) and 54 to 141 (KEEH…EDDD). Positions 35–104 (PKRPSSAFFV…EYEKNMKAYN (70 aa)) form a DNA-binding region, HMG box. At Ser122 the chain carries Phosphoserine. Residues 124–141 (VNDEDDAEDGSEEEEDDD) show a composition bias toward acidic residues.

The protein belongs to the HMGB family. Expressed in lateral roots, root tips, stems, cotyledons, leaves and flowers (excluding ovary and pedicels).

Its subcellular location is the nucleus. The protein resides in the cytoplasm. It is found in the cytosol. Its function is as follows. Binds preferentially double-stranded DNA. The chain is High mobility group B protein 3 (HMGB3) from Arabidopsis thaliana (Mouse-ear cress).